A 352-amino-acid polypeptide reads, in one-letter code: Nicotinate-nucleotide--dimethylbenzimidazole phosphoribosyltransferase (352 aa).

The active-site Proton acceptor is E318.

The protein belongs to the CobT family.

It carries out the reaction 5,6-dimethylbenzimidazole + nicotinate beta-D-ribonucleotide = alpha-ribazole 5'-phosphate + nicotinate + H(+). It functions in the pathway nucleoside biosynthesis; alpha-ribazole biosynthesis; alpha-ribazole from 5,6-dimethylbenzimidazole: step 1/2. Its function is as follows. Catalyzes the synthesis of alpha-ribazole-5'-phosphate from nicotinate mononucleotide (NAMN) and 5,6-dimethylbenzimidazole (DMB). This Geobacter sulfurreducens (strain ATCC 51573 / DSM 12127 / PCA) protein is Nicotinate-nucleotide--dimethylbenzimidazole phosphoribosyltransferase.